A 514-amino-acid polypeptide reads, in one-letter code: Arabinose import ATP-binding protein AraG (514 aa).

ABC transporter domains are found at residues Leu-16–Arg-251 and Arg-251–His-507. Position 48 to 55 (Gly-48 to Ser-55) interacts with ATP.

Belongs to the ABC transporter superfamily. Arabinose importer (TC 3.A.1.2.2) family. In terms of assembly, the complex is composed of two ATP-binding proteins (AraG), two transmembrane proteins (AraH) and a solute-binding protein (AraF).

It is found in the cell inner membrane. It carries out the reaction L-arabinose(out) + ATP + H2O = L-arabinose(in) + ADP + phosphate + H(+). In terms of biological role, part of the ABC transporter complex AraFGH involved in arabinose import. Responsible for energy coupling to the transport system. The chain is Arabinose import ATP-binding protein AraG from Pseudomonas fluorescens (strain Pf0-1).